A 343-amino-acid polypeptide reads, in one-letter code: Anthranilate phosphoribosyltransferase (343 aa).

Residues G84, 87-88 (GD), T92, 94-97 (NIST), 112-120 (KHGNRSASS), and S124 contribute to the 5-phospho-alpha-D-ribose 1-diphosphate site. G84 serves as a coordination point for anthranilate. S96 serves as a coordination point for Mg(2+). Residue N115 participates in anthranilate binding. R170 is an anthranilate binding site. Mg(2+) contacts are provided by D229 and E230.

The protein belongs to the anthranilate phosphoribosyltransferase family. Homodimer. It depends on Mg(2+) as a cofactor.

It carries out the reaction N-(5-phospho-beta-D-ribosyl)anthranilate + diphosphate = 5-phospho-alpha-D-ribose 1-diphosphate + anthranilate. The protein operates within amino-acid biosynthesis; L-tryptophan biosynthesis; L-tryptophan from chorismate: step 2/5. Functionally, catalyzes the transfer of the phosphoribosyl group of 5-phosphorylribose-1-pyrophosphate (PRPP) to anthranilate to yield N-(5'-phosphoribosyl)-anthranilate (PRA). The protein is Anthranilate phosphoribosyltransferase of Bordetella bronchiseptica (strain ATCC BAA-588 / NCTC 13252 / RB50) (Alcaligenes bronchisepticus).